The primary structure comprises 211 residues: Major fimbrial subunit (211 aa).

Positions 1-20 (MKKTLLGSLILLAFAGNVQA) are cleaved as a signal peptide. Cysteine 43 and cysteine 83 are oxidised to a cystine.

This sequence belongs to the fimbrial protein family.

The protein localises to the fimbrium. Functionally, mediates adherence to oropharyngeal epithelial cells. Helps the airway colonization process. This is Major fimbrial subunit (hifA) from Haemophilus influenzae.